The sequence spans 421 residues: Gamma-glutamyl phosphate reductase (421 aa).

This sequence belongs to the gamma-glutamyl phosphate reductase family.

It localises to the cytoplasm. It carries out the reaction L-glutamate 5-semialdehyde + phosphate + NADP(+) = L-glutamyl 5-phosphate + NADPH + H(+). It functions in the pathway amino-acid biosynthesis; L-proline biosynthesis; L-glutamate 5-semialdehyde from L-glutamate: step 2/2. Functionally, catalyzes the NADPH-dependent reduction of L-glutamate 5-phosphate into L-glutamate 5-semialdehyde and phosphate. The product spontaneously undergoes cyclization to form 1-pyrroline-5-carboxylate. This Dinoroseobacter shibae (strain DSM 16493 / NCIMB 14021 / DFL 12) protein is Gamma-glutamyl phosphate reductase.